The primary structure comprises 216 residues: Imidazole glycerol phosphate synthase subunit HisH 1 (216 aa).

A Glutamine amidotransferase type-1 domain is found at 4-216 (CVLIVDAGLG…LQNFIALNPC (213 aa)). C84 functions as the Nucleophile in the catalytic mechanism. Residues H195 and E197 contribute to the active site.

Heterodimer of HisH and HisF.

Its subcellular location is the cytoplasm. It carries out the reaction 5-[(5-phospho-1-deoxy-D-ribulos-1-ylimino)methylamino]-1-(5-phospho-beta-D-ribosyl)imidazole-4-carboxamide + L-glutamine = D-erythro-1-(imidazol-4-yl)glycerol 3-phosphate + 5-amino-1-(5-phospho-beta-D-ribosyl)imidazole-4-carboxamide + L-glutamate + H(+). The catalysed reaction is L-glutamine + H2O = L-glutamate + NH4(+). The protein operates within amino-acid biosynthesis; L-histidine biosynthesis; L-histidine from 5-phospho-alpha-D-ribose 1-diphosphate: step 5/9. In terms of biological role, IGPS catalyzes the conversion of PRFAR and glutamine to IGP, AICAR and glutamate. The HisH subunit provides the glutamine amidotransferase activity that produces the ammonia necessary to HisF for the synthesis of IGP and AICAR. This Prochlorococcus marinus (strain MIT 9313) protein is Imidazole glycerol phosphate synthase subunit HisH 1 (hisH1).